The sequence spans 243 residues: 1-(5-phosphoribosyl)-5-[(5-phosphoribosylamino)methylideneamino] imidazole-4-carboxamide isomerase (243 aa).

Residue Asp-8 is the Proton acceptor of the active site. The Proton donor role is filled by Asp-129.

Belongs to the HisA/HisF family.

It localises to the cytoplasm. The enzyme catalyses 1-(5-phospho-beta-D-ribosyl)-5-[(5-phospho-beta-D-ribosylamino)methylideneamino]imidazole-4-carboxamide = 5-[(5-phospho-1-deoxy-D-ribulos-1-ylimino)methylamino]-1-(5-phospho-beta-D-ribosyl)imidazole-4-carboxamide. It functions in the pathway amino-acid biosynthesis; L-histidine biosynthesis; L-histidine from 5-phospho-alpha-D-ribose 1-diphosphate: step 4/9. This is 1-(5-phosphoribosyl)-5-[(5-phosphoribosylamino)methylideneamino] imidazole-4-carboxamide isomerase from Citrifermentans bemidjiense (strain ATCC BAA-1014 / DSM 16622 / JCM 12645 / Bem) (Geobacter bemidjiensis).